The primary structure comprises 122 residues: Large ribosomal subunit protein eL22B (122 aa).

The protein belongs to the eukaryotic ribosomal protein eL22 family. In terms of assembly, component of the large ribosomal subunit (LSU). Mature yeast ribosomes consist of a small (40S) and a large (60S) subunit. The 40S small subunit contains 1 molecule of ribosomal RNA (18S rRNA) and 33 different proteins (encoded by 57 genes). The large 60S subunit contains 3 rRNA molecules (25S, 5.8S and 5S rRNA) and 46 different proteins (encoded by 81 genes).

It is found in the cytoplasm. Component of the ribosome, a large ribonucleoprotein complex responsible for the synthesis of proteins in the cell. The small ribosomal subunit (SSU) binds messenger RNAs (mRNAs) and translates the encoded message by selecting cognate aminoacyl-transfer RNA (tRNA) molecules. The large subunit (LSU) contains the ribosomal catalytic site termed the peptidyl transferase center (PTC), which catalyzes the formation of peptide bonds, thereby polymerizing the amino acids delivered by tRNAs into a polypeptide chain. The nascent polypeptides leave the ribosome through a tunnel in the LSU and interact with protein factors that function in enzymatic processing, targeting, and the membrane insertion of nascent chains at the exit of the ribosomal tunnel. This Saccharomyces cerevisiae (strain ATCC 204508 / S288c) (Baker's yeast) protein is Large ribosomal subunit protein eL22B.